Reading from the N-terminus, the 908-residue chain is AdoMet-dependent rRNA methyltransferase SPB1 (908 aa).

Residues Gly-57, Trp-59, Asp-77, Asp-93, and Asp-118 each contribute to the S-adenosyl-L-methionine site. Lys-158 serves as the catalytic Proton acceptor. Positions 378-422 (MDEEEQITEELQKLQQAKLAKTKRERKRANEKKARELLKLQLNMT) form a coiled coil. 3 disordered regions span residues 440 to 513 (IFDL…YDSY), 535 to 715 (NFDA…DEVK), and 806 to 841 (AKGR…EKAR). Residues 464-493 (DDGEGMDLASESEEEEDEDEEDDEVLDSDE) show a composition bias toward acidic residues. The span at 535–545 (NFDAWHGIQEK) shows a compositional bias: basic and acidic residues. Acidic residues-rich tracts occupy residues 546 to 564 (SDEE…EEGG) and 579 to 591 (DSSD…EPET). The span at 592–610 (EVPKKIKKVSFEKPARSEK) shows a compositional bias: basic and acidic residues. Composition is skewed to acidic residues over residues 650–678 (DGDD…EDAS) and 685–712 (EGDD…EDQD). Residues 816–827 (ARMEKAKKKADG) show a composition bias toward basic and acidic residues.

Belongs to the class I-like SAM-binding methyltransferase superfamily. RNA methyltransferase RlmE family. SPB1 subfamily. As to quaternary structure, component of the nucleolar and nucleoplasmic pre-60S ribosomal particle.

It is found in the nucleus. It localises to the nucleolus. The enzyme catalyses a ribonucleotide in rRNA + S-adenosyl-L-methionine = a 2'-O-methylribonucleotide in rRNA + S-adenosyl-L-homocysteine + H(+). Required for proper assembly of pre-ribosomal particles during the biogenesis of the 60S ribosomal subunit. This chain is AdoMet-dependent rRNA methyltransferase SPB1, found in Cryptococcus neoformans var. neoformans serotype D (strain B-3501A) (Filobasidiella neoformans).